A 368-amino-acid polypeptide reads, in one-letter code: Phosphate acyltransferase (368 aa).

It belongs to the PlsX family. As to quaternary structure, homodimer. Probably interacts with PlsY.

Its subcellular location is the cytoplasm. The catalysed reaction is a fatty acyl-[ACP] + phosphate = an acyl phosphate + holo-[ACP]. It participates in lipid metabolism; phospholipid metabolism. In terms of biological role, catalyzes the reversible formation of acyl-phosphate (acyl-PO(4)) from acyl-[acyl-carrier-protein] (acyl-ACP). This enzyme utilizes acyl-ACP as fatty acyl donor, but not acyl-CoA. In Granulibacter bethesdensis (strain ATCC BAA-1260 / CGDNIH1), this protein is Phosphate acyltransferase.